The sequence spans 127 residues: Putative platinum sensitivity protein 1 (127 aa).

The polypeptide is Putative platinum sensitivity protein 1 (PSY1) (Saccharomyces cerevisiae (strain ATCC 204508 / S288c) (Baker's yeast)).